The following is a 764-amino-acid chain: Zygote defective protein 12 (764 aa).

Residues 1-20 show a composition bias toward polar residues; sequence MLDLTNQESDSSENGNSKYA. The interval 1-33 is disordered; that stretch reads MLDLTNQESDSSENGNSKYADSTDGRGIGTSRR. Positions 1-236 are interaction with dli-1; that stretch reads MLDLTNQESD…ESSVITNGNG (236 aa). One can recognise a Calponin-homology (CH) domain in the interval 43–169; that stretch reads RKDLADLVFW…VSLAFIGKTQ (127 aa). Coiled-coil stretches lie at residues 244–405 and 436–692; these read LSAN…HVKT and GLES…NRLI. Residues 732-752 form a helical membrane-spanning segment; sequence ALPWRFGISSMLIIFMVWFFI.

The protein belongs to the hook family. In terms of assembly, homodimer. Interacts with the dynein subunit dli-1 via its N-terminus. May interact with microtubules.

The protein localises to the nucleus membrane. The protein resides in the cytoplasm. It localises to the cytoskeleton. Its subcellular location is the microtubule organizing center. It is found in the centrosome. Cytoskeletal linker protein, which is essential for attachment of the centrosome to the nucleus. Required for dynein localization to the nuclear envelope. This chain is Zygote defective protein 12 (zyg-12), found in Caenorhabditis briggsae.